Reading from the N-terminus, the 232-residue chain is Orotidine 5'-phosphate decarboxylase (232 aa).

Residues Asp-13, Lys-35, 62–71 (DLKFHDIPNT), Thr-122, Arg-182, Gln-191, Gly-211, and Arg-212 contribute to the substrate site. Lys-64 (proton donor) is an active-site residue.

The protein belongs to the OMP decarboxylase family. Type 1 subfamily. In terms of assembly, homodimer.

The catalysed reaction is orotidine 5'-phosphate + H(+) = UMP + CO2. The protein operates within pyrimidine metabolism; UMP biosynthesis via de novo pathway; UMP from orotate: step 2/2. Its function is as follows. Catalyzes the decarboxylation of orotidine 5'-monophosphate (OMP) to uridine 5'-monophosphate (UMP). This Pseudomonas aeruginosa (strain LESB58) protein is Orotidine 5'-phosphate decarboxylase.